Here is a 240-residue protein sequence, read N- to C-terminus: tRNA pseudouridine synthase A (240 aa).

The active-site Nucleophile is the D50. Residue Y109 coordinates substrate.

This sequence belongs to the tRNA pseudouridine synthase TruA family. Homodimer.

It catalyses the reaction uridine(38/39/40) in tRNA = pseudouridine(38/39/40) in tRNA. In terms of biological role, formation of pseudouridine at positions 38, 39 and 40 in the anticodon stem and loop of transfer RNAs. In Campylobacter jejuni subsp. jejuni serotype O:6 (strain 81116 / NCTC 11828), this protein is tRNA pseudouridine synthase A.